Consider the following 432-residue polypeptide: Homogentisate 1,2-dioxygenase (432 aa).

Fe cation contacts are provided by His-333, Glu-339, and His-369.

Belongs to the homogentisate dioxygenase family. Fe cation is required as a cofactor.

The enzyme catalyses homogentisate + O2 = 4-maleylacetoacetate + H(+). It participates in amino-acid degradation; L-phenylalanine degradation; acetoacetate and fumarate from L-phenylalanine: step 4/6. This Dictyostelium discoideum (Social amoeba) protein is Homogentisate 1,2-dioxygenase (hgd).